The following is a 347-amino-acid chain: tRNA N6-adenosine threonylcarbamoyltransferase (347 aa).

Fe cation contacts are provided by His-111 and His-115. Substrate contacts are provided by residues 134-138 (LISGG), Asp-167, Gly-180, and Asn-277. Position 305 (Asp-305) interacts with Fe cation.

Belongs to the KAE1 / TsaD family. Fe(2+) serves as cofactor.

The protein localises to the cytoplasm. The catalysed reaction is L-threonylcarbamoyladenylate + adenosine(37) in tRNA = N(6)-L-threonylcarbamoyladenosine(37) in tRNA + AMP + H(+). In terms of biological role, required for the formation of a threonylcarbamoyl group on adenosine at position 37 (t(6)A37) in tRNAs that read codons beginning with adenine. Is involved in the transfer of the threonylcarbamoyl moiety of threonylcarbamoyl-AMP (TC-AMP) to the N6 group of A37, together with TsaE and TsaB. TsaD likely plays a direct catalytic role in this reaction. The polypeptide is tRNA N6-adenosine threonylcarbamoyltransferase (Actinobacillus pleuropneumoniae serotype 5b (strain L20)).